The chain runs to 296 residues: ATP phosphoribosyltransferase (296 aa).

Belongs to the ATP phosphoribosyltransferase family.

It localises to the cytoplasm. It catalyses the reaction 1-(5-phospho-beta-D-ribosyl)-ATP + diphosphate = 5-phospho-alpha-D-ribose 1-diphosphate + ATP. Its pathway is amino-acid biosynthesis; L-histidine biosynthesis; L-histidine from 5-phospho-alpha-D-ribose 1-diphosphate: step 1/9. In terms of biological role, catalyzes the condensation of ATP and 5-phosphoribose 1-diphosphate to form N'-(5'-phosphoribosyl)-ATP (PR-ATP). Has a crucial role in the pathway because the rate of histidine biosynthesis seems to be controlled primarily by regulation of the enzymatic activity. This is ATP phosphoribosyltransferase (HIS1) from Yarrowia lipolytica (strain CLIB 122 / E 150) (Yeast).